The primary structure comprises 200 residues: NADH-quinone oxidoreductase subunit C (200 aa).

This sequence belongs to the complex I 30 kDa subunit family. NDH-1 is composed of 14 different subunits. Subunits NuoB, C, D, E, F, and G constitute the peripheral sector of the complex.

It localises to the cell inner membrane. The catalysed reaction is a quinone + NADH + 5 H(+)(in) = a quinol + NAD(+) + 4 H(+)(out). Functionally, NDH-1 shuttles electrons from NADH, via FMN and iron-sulfur (Fe-S) centers, to quinones in the respiratory chain. The immediate electron acceptor for the enzyme in this species is believed to be ubiquinone. Couples the redox reaction to proton translocation (for every two electrons transferred, four hydrogen ions are translocated across the cytoplasmic membrane), and thus conserves the redox energy in a proton gradient. The chain is NADH-quinone oxidoreductase subunit C from Burkholderia cenocepacia (strain HI2424).